Here is a 115-residue protein sequence, read N- to C-terminus: EVKLEESGGGLVQPGGSMKLSCVASGFTFSNYWMNWVRQSPEKGLEWVAEIRLKSNNYATHYAESVKGRFTISRDDSKSSVYLQMNNLRAEDTGIYYCTTGFAYWGQGTLVTVSA.

Residues 1–114 (EVKLEESGGG…WGQGTLVTVS (114 aa)) enclose the Ig-like domain. An intrachain disulfide couples cysteine 22 to cysteine 98.

The chain is Ig heavy chain V-III region J606 from Mus musculus (Mouse).